The following is a 94-amino-acid chain: Pyrimidine/purine nucleoside phosphorylase 2 (94 aa).

It belongs to the nucleoside phosphorylase PpnP family.

It carries out the reaction a purine D-ribonucleoside + phosphate = a purine nucleobase + alpha-D-ribose 1-phosphate. The enzyme catalyses adenosine + phosphate = alpha-D-ribose 1-phosphate + adenine. It catalyses the reaction cytidine + phosphate = cytosine + alpha-D-ribose 1-phosphate. The catalysed reaction is guanosine + phosphate = alpha-D-ribose 1-phosphate + guanine. It carries out the reaction inosine + phosphate = alpha-D-ribose 1-phosphate + hypoxanthine. The enzyme catalyses thymidine + phosphate = 2-deoxy-alpha-D-ribose 1-phosphate + thymine. It catalyses the reaction uridine + phosphate = alpha-D-ribose 1-phosphate + uracil. The catalysed reaction is xanthosine + phosphate = alpha-D-ribose 1-phosphate + xanthine. In terms of biological role, catalyzes the phosphorolysis of diverse nucleosides, yielding D-ribose 1-phosphate and the respective free bases. Can use uridine, adenosine, guanosine, cytidine, thymidine, inosine and xanthosine as substrates. Also catalyzes the reverse reactions. The chain is Pyrimidine/purine nucleoside phosphorylase 2 from Psychrobacter arcticus (strain DSM 17307 / VKM B-2377 / 273-4).